A 141-amino-acid polypeptide reads, in one-letter code: Hemoglobin subunit alpha (141 aa).

In terms of domain architecture, Globin spans Val1–Arg141. Ser3 bears the Phosphoserine mark. Lys7 is subject to N6-succinyllysine. Phosphothreonine is present on Thr8. Lys11 carries the N6-succinyllysine modification. Lys16 carries the N6-acetyllysine; alternate modification. An N6-succinyllysine; alternate modification is found at Lys16. Tyr24 is subject to Phosphotyrosine. Ser35 bears the Phosphoserine mark. At Lys40 the chain carries N6-succinyllysine. A Phosphoserine modification is found at Ser49. His58 provides a ligand contact to O2. Heme b is bound at residue His87. Ser102 carries the phosphoserine modification. Position 108 is a phosphothreonine (Thr108). A Phosphoserine modification is found at Ser124. 2 positions are modified to phosphothreonine: Thr134 and Thr137. Ser138 is modified (phosphoserine).

This sequence belongs to the globin family. Heterotetramer of two alpha chains and two beta chains. As to expression, red blood cells.

Involved in oxygen transport from the lung to the various peripheral tissues. Its function is as follows. Hemopressin acts as an antagonist peptide of the cannabinoid receptor CNR1. Hemopressin-binding efficiently blocks cannabinoid receptor CNR1 and subsequent signaling. This chain is Hemoglobin subunit alpha (HBA), found in Vulpes vulpes (Red fox).